A 558-amino-acid chain; its full sequence is Urocanate hydratase (558 aa).

NAD(+) is bound by residues 54–55 (GG), Q132, 178–180 (GMG), E198, 244–245 (NA), 265–269 (QTSAH), 275–276 (YL), and Y324. C412 is a catalytic residue. An NAD(+)-binding site is contributed by G494.

Belongs to the urocanase family. NAD(+) serves as cofactor.

Its subcellular location is the cytoplasm. The catalysed reaction is 4-imidazolone-5-propanoate = trans-urocanate + H2O. It participates in amino-acid degradation; L-histidine degradation into L-glutamate; N-formimidoyl-L-glutamate from L-histidine: step 2/3. Catalyzes the conversion of urocanate to 4-imidazolone-5-propionate. The chain is Urocanate hydratase from Acinetobacter baumannii (strain AB307-0294).